The sequence spans 453 residues: MTTDTIVAQATAPGRGGVGIIRVSGPLAAHVAQTVTGRTLRPRYAEYLPFTDEDGQQLDQGIALFFPNPHSFTGEDVLELQGHGGPVVMDMLIRRILQIKGVRPARPGEFSERAFLNDKMDLTQAEAIADLIDASSEQAAKSALQSLQGEFSKRIHTLVESLIHLRIYVEAAIDFPEEEIDFLADGKVSADLQTIIDNLAAVRREANQGAIMREGMKVVIAGRPNAGKSSLLNALSGKESAIVTDIAGTTRDVLREHIHIDGMPLHIIDTAGLRDASDAVEKIGIERAWEEIRQADRVLFMVDGTTTEATDPQDIWPDFVDKLPENIGITVIRNKADQTGEPLGICHVNQPTLIRLSAKTGQGVDALRQHLKECMGFSGNQEGGFMARRRHLDALERAAEHLAIGQQQLEGYMAGEILAEELRIAQQHLNEITGEFSSDDLLGRIFSSFCIGK.

Arg-22, Glu-79, and Lys-119 together coordinate (6S)-5-formyl-5,6,7,8-tetrahydrofolate. Residues 215 to 376 enclose the TrmE-type G domain; that stretch reads GMKVVIAGRP…LRQHLKECMG (162 aa). Asn-225 is a K(+) binding site. GTP contacts are provided by residues 225–230, 244–250, 269–272, and 334–337; these read NAGKSS, TDIAGTT, DTAG, and NKAD. Ser-229 is a binding site for Mg(2+). K(+) contacts are provided by Thr-244, Ile-246, and Thr-249. Thr-250 is a Mg(2+) binding site. Lys-453 is a binding site for (6S)-5-formyl-5,6,7,8-tetrahydrofolate.

The protein belongs to the TRAFAC class TrmE-Era-EngA-EngB-Septin-like GTPase superfamily. TrmE GTPase family. In terms of assembly, homodimer. Heterotetramer of two MnmE and two MnmG subunits. Requires K(+) as cofactor.

The protein resides in the cytoplasm. In terms of biological role, exhibits a very high intrinsic GTPase hydrolysis rate. Involved in the addition of a carboxymethylaminomethyl (cmnm) group at the wobble position (U34) of certain tRNAs, forming tRNA-cmnm(5)s(2)U34. The sequence is that of tRNA modification GTPase MnmE from Vibrio cholerae serotype O1 (strain ATCC 39315 / El Tor Inaba N16961).